We begin with the raw amino-acid sequence, 25 residues long: Germin-like protein (25 aa).

This sequence belongs to the germin family.

The chain is Germin-like protein from Populus euphratica (Euphrates poplar).